A 439-amino-acid polypeptide reads, in one-letter code: Exodeoxyribonuclease 7 large subunit (439 aa).

Belongs to the XseA family. In terms of assembly, heterooligomer composed of large and small subunits.

The protein resides in the cytoplasm. It catalyses the reaction Exonucleolytic cleavage in either 5'- to 3'- or 3'- to 5'-direction to yield nucleoside 5'-phosphates.. In terms of biological role, bidirectionally degrades single-stranded DNA into large acid-insoluble oligonucleotides, which are then degraded further into small acid-soluble oligonucleotides. The sequence is that of Exodeoxyribonuclease 7 large subunit from Haemophilus influenzae (strain ATCC 51907 / DSM 11121 / KW20 / Rd).